Here is a 353-residue protein sequence, read N- to C-terminus: Carbamoyl phosphate synthase small chain (353 aa).

Residues 1–166 (MSDAYLALET…AETHGNGDTT (166 aa)) form a CPSase region. L-glutamine is bound by residues S45, G214, and G216. Positions 166-349 (TVALVDCGAK…LAMADASYTP (184 aa)) constitute a Glutamine amidotransferase type-1 domain. C241 serves as the catalytic Nucleophile. L-glutamine-binding residues include L242, Q245, N283, G285, and Y286. Residues H322 and E324 contribute to the active site.

It belongs to the CarA family. In terms of assembly, composed of two chains; the small (or glutamine) chain promotes the hydrolysis of glutamine to ammonia, which is used by the large (or ammonia) chain to synthesize carbamoyl phosphate. Tetramer of heterodimers (alpha,beta)4.

It carries out the reaction hydrogencarbonate + L-glutamine + 2 ATP + H2O = carbamoyl phosphate + L-glutamate + 2 ADP + phosphate + 2 H(+). It catalyses the reaction L-glutamine + H2O = L-glutamate + NH4(+). Its pathway is amino-acid biosynthesis; L-arginine biosynthesis; carbamoyl phosphate from bicarbonate: step 1/1. The protein operates within pyrimidine metabolism; UMP biosynthesis via de novo pathway; (S)-dihydroorotate from bicarbonate: step 1/3. Its function is as follows. Small subunit of the glutamine-dependent carbamoyl phosphate synthetase (CPSase). CPSase catalyzes the formation of carbamoyl phosphate from the ammonia moiety of glutamine, carbonate, and phosphate donated by ATP, constituting the first step of 2 biosynthetic pathways, one leading to arginine and/or urea and the other to pyrimidine nucleotides. The small subunit (glutamine amidotransferase) binds and cleaves glutamine to supply the large subunit with the substrate ammonia. This chain is Carbamoyl phosphate synthase small chain, found in Halobacterium salinarum (strain ATCC 29341 / DSM 671 / R1).